The following is a 215-amino-acid chain: Ribosomal RNA small subunit methyltransferase G (215 aa).

S-adenosyl-L-methionine is bound by residues Gly-77, Phe-82, Ile-130 to Glu-131, and Arg-146.

Belongs to the methyltransferase superfamily. RNA methyltransferase RsmG family.

The protein localises to the cytoplasm. The enzyme catalyses guanosine(527) in 16S rRNA + S-adenosyl-L-methionine = N(7)-methylguanosine(527) in 16S rRNA + S-adenosyl-L-homocysteine. Functionally, specifically methylates the N7 position of guanine in position 527 of 16S rRNA. This is Ribosomal RNA small subunit methyltransferase G from Bartonella bacilliformis (strain ATCC 35685 / KC583 / Herrer 020/F12,63).